We begin with the raw amino-acid sequence, 107 residues long: Nucleoid-associated protein RC1_2305 (107 aa).

Belongs to the YbaB/EbfC family. In terms of assembly, homodimer.

The protein resides in the cytoplasm. The protein localises to the nucleoid. Its function is as follows. Binds to DNA and alters its conformation. May be involved in regulation of gene expression, nucleoid organization and DNA protection. The chain is Nucleoid-associated protein RC1_2305 from Rhodospirillum centenum (strain ATCC 51521 / SW).